Consider the following 419-residue polypeptide: UDP-N-acetylglucosamine 1-carboxyvinyltransferase (419 aa).

22-23 (KN) is a phosphoenolpyruvate binding site. Arginine 91 serves as a coordination point for UDP-N-acetyl-alpha-D-glucosamine. Cysteine 115 acts as the Proton donor in catalysis. Position 115 is a 2-(S-cysteinyl)pyruvic acid O-phosphothioketal (cysteine 115). UDP-N-acetyl-alpha-D-glucosamine is bound by residues 120–124 (RPVDL), 160–163 (KVSV), aspartate 305, and isoleucine 327.

This sequence belongs to the EPSP synthase family. MurA subfamily.

Its subcellular location is the cytoplasm. The catalysed reaction is phosphoenolpyruvate + UDP-N-acetyl-alpha-D-glucosamine = UDP-N-acetyl-3-O-(1-carboxyvinyl)-alpha-D-glucosamine + phosphate. The protein operates within cell wall biogenesis; peptidoglycan biosynthesis. In terms of biological role, cell wall formation. Adds enolpyruvyl to UDP-N-acetylglucosamine. The protein is UDP-N-acetylglucosamine 1-carboxyvinyltransferase of Citrobacter koseri (strain ATCC BAA-895 / CDC 4225-83 / SGSC4696).